We begin with the raw amino-acid sequence, 413 residues long: Zeaxanthin glucosyltransferase (413 aa).

The protein belongs to the UDP-glycosyltransferase family.

The catalysed reaction is all-trans-zeaxanthin + 2 UDP-alpha-D-glucose = zeaxanthin bis(beta-D-glucoside) + 2 UDP + 2 H(+). The protein operates within carotenoid biosynthesis; zeaxanthin diglucoside biosynthesis. Functionally, catalyzes the glycosylation reaction which converts zeaxanthin to zeaxanthin bis(beta-D-glucoside). The reaction proceeds in two steps with the monoglucoside as an intermediate. This Pseudescherichia vulneris (Escherichia vulneris) protein is Zeaxanthin glucosyltransferase (crtX).